We begin with the raw amino-acid sequence, 726 residues long: Probable dipeptidyl-peptidase 5 (726 aa).

The signal sequence occupies residues 1–19; the sequence is MGALQWLSITAAAASAVSA. Asn97, Asn153, Asn259, Asn398, Asn453, and Asn529 each carry an N-linked (GlcNAc...) asparagine glycan. Residue Ser564 is the Charge relay system of the active site. N-linked (GlcNAc...) asparagine glycosylation occurs at Asn611. Residues Asp647 and His679 each act as charge relay system in the active site.

Belongs to the peptidase S9C family.

The protein localises to the secreted. Functionally, extracellular dipeptidyl-peptidase which removes N-terminal dipeptides sequentially from polypeptides having unsubstituted N-termini. This Aspergillus niger protein is Probable dipeptidyl-peptidase 5 (dpp5).